Reading from the N-terminus, the 347-residue chain is Violet-sensitive opsin (347 aa).

The Extracellular portion of the chain corresponds to 1-31; that stretch reads MLEEEDFYLFKNVSNVSPFDGPQYHIAPKWA. Asparagine 12 carries N-linked (GlcNAc...) asparagine glycosylation. A helical transmembrane segment spans residues 32-56; the sequence is FTLQAIFMGMVFLIGTPLNFIVLLV. Topologically, residues 57–68 are cytoplasmic; that stretch reads TIKYKKLRQPLN. Residues 69–94 form a helical membrane-spanning segment; it reads YILVNITVGGFLMCIFSIFPVFVSSS. Over 95 to 108 the chain is Extracellular; sequence QGYFFFGRIACSID. Cysteine 105 and cysteine 182 form a disulfide bridge. Residues 109-128 traverse the membrane as a helical segment; that stretch reads AFVGTLTGLVTGWSLAFLAF. Residues 129-147 lie on the Cytoplasmic side of the membrane; that stretch reads ERYIVICKPMGNFNFSSSH. The chain crosses the membrane as a helical span at residues 148–171; it reads ALAVVICTWIIGIVVSVPPFLGWS. Residues 172-197 are Extracellular-facing; sequence RYMPEGLQCSCGPDWYTVGTKYRSEY. The chain crosses the membrane as a helical span at residues 198–225; that stretch reads YTWFIFIFCFVIPLSLICFSYGRLLGAL. The Cytoplasmic portion of the chain corresponds to 226-247; that stretch reads RAVAAQQQESASTQKAEREVSR. Residues 248-271 traverse the membrane as a helical segment; that stretch reads MVIFMVGSFCLCYVPYAAMAMYMV. At 272-279 the chain is on the extracellular side; it reads TNRNHGLD. A helical transmembrane segment spans residues 280 to 304; the sequence is LRLVTIPAFFSKSSCVYNPIIYSFM. Lysine 291 bears the N6-(retinylidene)lysine mark. Over 305–347 the chain is Cytoplasmic; that stretch reads NKQFRGCIMETVCGRPMSDDSSVSSTSQRTEVSTVSSSQVSPA. Residues 323-347 form a disordered region; sequence DDSSVSSTSQRTEVSTVSSSQVSPA.

Belongs to the G-protein coupled receptor 1 family. Opsin subfamily. In terms of processing, phosphorylated on some or all of the serine and threonine residues present in the C-terminal region. The color pigments are found in the cone photoreceptor cells.

It is found in the membrane. Its function is as follows. Visual pigments are the light-absorbing molecules that mediate vision. They consist of an apoprotein, opsin, covalently linked to cis-retinal. The polypeptide is Violet-sensitive opsin (Xenopus laevis (African clawed frog)).